The chain runs to 556 residues: Urocanate hydratase (556 aa).

NAD(+) contacts are provided by residues 52–53 (GG), Gln-130, 176–178 (GMG), Glu-196, Arg-201, 242–243 (NA), 263–267 (QTSAH), 273–274 (YL), and Tyr-322. Residue Cys-410 is part of the active site. Gly-492 lines the NAD(+) pocket.

This sequence belongs to the urocanase family. NAD(+) serves as cofactor.

It localises to the cytoplasm. It catalyses the reaction 4-imidazolone-5-propanoate = trans-urocanate + H2O. The protein operates within amino-acid degradation; L-histidine degradation into L-glutamate; N-formimidoyl-L-glutamate from L-histidine: step 2/3. Its function is as follows. Catalyzes the conversion of urocanate to 4-imidazolone-5-propionate. The sequence is that of Urocanate hydratase from Bradyrhizobium diazoefficiens (strain JCM 10833 / BCRC 13528 / IAM 13628 / NBRC 14792 / USDA 110).